A 520-amino-acid chain; its full sequence is Hydroxymethylglutaryl-CoA synthase, cytoplasmic (520 aa).

Ser-4 bears the Phosphoserine mark. Residues Asp-43 and Ala-44 each coordinate (3S)-3-hydroxy-3-methylglutaryl-CoA. Residue 44–46 (AGK) coordinates CoA. An N6-acetyllysine modification is found at Lys-46. Residue Glu-95 is the Proton donor/acceptor of the active site. Residues Cys-129, Asn-167, Thr-171, Ser-221, and His-264 each coordinate (3S)-3-hydroxy-3-methylglutaryl-CoA. Cys-129 acts as the Acyl-thioester intermediate in catalysis. Asn-167 lines the CoA pocket. Ser-221 serves as a coordination point for CoA. His-264 serves as the catalytic Proton donor/acceptor. 2 residues coordinate CoA: Lys-269 and Lys-273. Positions 273, 343, and 377 each coordinate (3S)-3-hydroxy-3-methylglutaryl-CoA. Lys-273 carries the post-translational modification N6-acetyllysine. The disordered stretch occupies residues 486–520 (SNTATEHIPSPAKKVPRLPATAAESESAVISNGEH). Ser-495 and Ser-516 each carry phosphoserine.

The protein belongs to the thiolase-like superfamily. HMG-CoA synthase family. As to quaternary structure, homodimer.

The protein localises to the cytoplasm. It carries out the reaction acetoacetyl-CoA + acetyl-CoA + H2O = (3S)-3-hydroxy-3-methylglutaryl-CoA + CoA + H(+). Its pathway is metabolic intermediate biosynthesis; (R)-mevalonate biosynthesis; (R)-mevalonate from acetyl-CoA: step 2/3. This enzyme condenses acetyl-CoA with acetoacetyl-CoA to form HMG-CoA, which is converted by HMG-CoA reductase (HMGCR) into mevalonate, a precursor for cholesterol synthesis. In Cricetulus griseus (Chinese hamster), this protein is Hydroxymethylglutaryl-CoA synthase, cytoplasmic.